A 946-amino-acid polypeptide reads, in one-letter code: DDB1- and CUL4-associated factor 5 (946 aa).

WD repeat units follow at residues 51–91 (GHFG…HSRV), 99–139 (EHHS…LDVF), 140–180 (AHED…HGEP), 185–225 (NYPS…SSLL), 277–317 (FNSC…EAGG), and 331–370 (GHRS…GCTG). A disordered region spans residues 449–478 (GVSERSGYTDSESSASLPRSPPPTVDESAD). The span at 454-465 (SGYTDSESSASL) shows a compositional bias: polar residues. Thr500 is modified (phosphothreonine). Disordered stretches follow at residues 527–656 (LSNE…MESV), 675–860 (SNNK…ELET), and 894–946 (CETP…KLKT). Ser531 and Ser533 each carry phosphoserine. A compositionally biased stretch (acidic residues) spans 531–544 (SDSEENVCEAELDT). A compositionally biased stretch (low complexity) spans 555–567 (PEDGSSSPSSSTS). Residues 579–592 (ATTRQRNAMRRRQK) are compositionally biased toward basic residues. A compositionally biased stretch (low complexity) spans 625–638 (LSPSPDSSPERSAS). Phosphoserine occurs at positions 626, 628, and 645. Over residues 691 to 701 (EGRAGTSHKDN) the composition is skewed to basic and acidic residues. Polar residues-rich tracts occupy residues 760–769 (GTSQDTNNSG) and 808–819 (TLNSASGNCPRT).

In terms of assembly, interacts with DDB1, CUL4A or CUL4B. Interacts with L3MBTL3. Interacts with SOX2. Interacts with DNMT1. Interacts with E2F1.

The protein operates within protein modification; protein ubiquitination. Functionally, is a substrate receptor for the CUL4-DDB1 E3 ubiquitin-protein ligase complex (CRL4), involved in the ubiquitination of a set of methylated non-histone proteins, including SOX2. The complex CRL4-DCAF5 is also involved in the ubiquitination of methylated DNMT1 and E2F1. The polypeptide is DDB1- and CUL4-associated factor 5 (Dcaf5) (Mus musculus (Mouse)).